We begin with the raw amino-acid sequence, 63 residues long: Overexpressed in colon carcinoma 1 protein homolog (63 aa).

The span at 1–10 shows a compositional bias: polar residues; it reads MGCGNSTATS. The segment at 1 to 39 is disordered; sequence MGCGNSTATSAAAGRGPTGAVKDTTEDSITEDDKRRNYG.

The protein belongs to the OCC1 family.

The protein is Overexpressed in colon carcinoma 1 protein homolog of Mus musculus (Mouse).